We begin with the raw amino-acid sequence, 329 residues long: Serpentine receptor class alpha-6 (329 aa).

The next 7 helical transmembrane spans lie at 26–46 (VDLL…KIVI), 68–88 (LYQI…FFML), 104–124 (YFKV…GLLI), 143–163 (IGVC…FIIL), 187–207 (NLFS…SIFI), 238–258 (ICFL…GILI), and 273–293 (FWIA…VLLI).

This sequence belongs to the nematode receptor-like protein sra family.

It is found in the membrane. In Caenorhabditis elegans, this protein is Serpentine receptor class alpha-6 (sra-6).